The chain runs to 304 residues: Acetyl-coenzyme A carboxylase carboxyl transferase subunit beta (304 aa).

Residues 25-294 enclose the CoA carboxyltransferase N-terminal domain; that stretch reads LWIKCPETGE…KAIKRDTATE (270 aa).

The protein belongs to the AccD/PCCB family. Acetyl-CoA carboxylase is a heterohexamer composed of biotin carboxyl carrier protein (AccB), biotin carboxylase (AccC) and two subunits each of ACCase subunit alpha (AccA) and ACCase subunit beta (AccD).

Its subcellular location is the cytoplasm. It catalyses the reaction N(6)-carboxybiotinyl-L-lysyl-[protein] + acetyl-CoA = N(6)-biotinyl-L-lysyl-[protein] + malonyl-CoA. It functions in the pathway lipid metabolism; malonyl-CoA biosynthesis; malonyl-CoA from acetyl-CoA: step 1/1. Component of the acetyl coenzyme A carboxylase (ACC) complex. Biotin carboxylase (BC) catalyzes the carboxylation of biotin on its carrier protein (BCCP) and then the CO(2) group is transferred by the transcarboxylase to acetyl-CoA to form malonyl-CoA. In Sinorhizobium medicae (strain WSM419) (Ensifer medicae), this protein is Acetyl-coenzyme A carboxylase carboxyl transferase subunit beta.